Consider the following 604-residue polypeptide: Kelch-like protein 20 (604 aa).

Positions 63-130 (CDVVLVVGAK…AYTSQITVEE (68 aa)) constitute a BTB domain. The BACK domain maps to 165–267 (CLGIRAFADT…SPKFLVGTVG (103 aa)). Kelch repeat units follow at residues 314 to 360 (VLFA…VLDD), 362 to 408 (LYAV…VLGG), 409 to 455 (FLYA…VLGG), 457 to 502 (LYAV…VYQD), 504 to 549 (IYAV…VVNG), and 551 to 596 (LMAV…VIKM).

As to quaternary structure, component of the BCR(KLHL20) E3 ubiquitin ligase complex, at least composed of CUL3, KLHL20 and RBX1. Interacts with PDZ-RhoGEF/ARHGEF11, DAPK1, PML and CORO7. Interacts with F-actin. Interacts with IFN-gamma (IFNG). Interacts (via kelch repeats) with IVNS1ABP (via kelch repeats); this interaction blocks the assembly of CUL3-KLHL20 complex.

Its subcellular location is the cytoplasm. The protein localises to the perinuclear region. It is found in the nucleus. The protein resides in the golgi apparatus. It localises to the trans-Golgi network. Its subcellular location is the cell projection. The protein localises to the axon. It is found in the dendrite. It functions in the pathway protein modification; protein ubiquitination. Its function is as follows. Substrate-specific adapter of a BCR (BTB-CUL3-RBX1) E3 ubiquitin-protein ligase complex involved in interferon response and anterograde Golgi to endosome transport. The BCR(KLHL20) E3 ubiquitin ligase complex mediates the ubiquitination of DAPK1, leading to its degradation by the proteasome, thereby acting as a negative regulator of apoptosis. The BCR(KLHL20) E3 ubiquitin ligase complex also specifically mediates 'Lys-33'-linked ubiquitination. Involved in anterograde Golgi to endosome transport by mediating 'Lys-33'-linked ubiquitination of CORO7, promoting interaction between CORO7 and EPS15, thereby facilitating actin polymerization and post-Golgi trafficking. Also acts as a regulator of endothelial migration during angiogenesis by controlling the activation of Rho GTPases. The BCR(KLHL20) E3 ubiquitin ligase complex acts as a regulator of neurite outgrowth by mediating ubiquitination and degradation of PDZ-RhoGEF/ARHGEF11. This Mus musculus (Mouse) protein is Kelch-like protein 20 (Klhl20).